A 286-amino-acid chain; its full sequence is Shikimate dehydrogenase (NADP(+)) (286 aa).

Shikimate contacts are provided by residues 19-21 (SFS) and Thr66. Lys70 acts as the Proton acceptor in catalysis. Shikimate is bound by residues Asn91 and Asp107. Residues 129-133 (GSGGA) and Leu229 each bind NADP(+). Shikimate is bound at residue Tyr231. Gly252 provides a ligand contact to NADP(+).

Belongs to the shikimate dehydrogenase family. Homodimer.

The catalysed reaction is shikimate + NADP(+) = 3-dehydroshikimate + NADPH + H(+). It participates in metabolic intermediate biosynthesis; chorismate biosynthesis; chorismate from D-erythrose 4-phosphate and phosphoenolpyruvate: step 4/7. Its function is as follows. Involved in the biosynthesis of the chorismate, which leads to the biosynthesis of aromatic amino acids. Catalyzes the reversible NADPH linked reduction of 3-dehydroshikimate (DHSA) to yield shikimate (SA). The sequence is that of Shikimate dehydrogenase (NADP(+)) from Prochlorococcus marinus (strain MIT 9301).